We begin with the raw amino-acid sequence, 232 residues long: PsbP domain-containing protein 2, chloroplastic (232 aa).

The N-terminal 34 residues, 1–34, are a transit peptide targeting the chloroplast; sequence MWSQSFLGSAPKLCLFSSSLPPFSHHKIHKFFCF. The N-terminal 37 residues, 35 to 71, are a transit peptide targeting the thylakoid; sequence AQNPSSTVSINLSKRHLNLSILTLFFNGFLLDNKAKS.

It belongs to the PsbP family.

It is found in the plastid. Its subcellular location is the chloroplast thylakoid lumen. This chain is PsbP domain-containing protein 2, chloroplastic (PPD2), found in Arabidopsis thaliana (Mouse-ear cress).